A 361-amino-acid chain; its full sequence is Peptide chain release factor 1 (361 aa).

N5-methylglutamine is present on Gln-236.

This sequence belongs to the prokaryotic/mitochondrial release factor family. In terms of processing, methylated by PrmC. Methylation increases the termination efficiency of RF1.

The protein resides in the cytoplasm. Peptide chain release factor 1 directs the termination of translation in response to the peptide chain termination codons UAG and UAA. This Lactobacillus delbrueckii subsp. bulgaricus (strain ATCC 11842 / DSM 20081 / BCRC 10696 / JCM 1002 / NBRC 13953 / NCIMB 11778 / NCTC 12712 / WDCM 00102 / Lb 14) protein is Peptide chain release factor 1.